The following is a 538-amino-acid chain: BTB/POZ domain-containing protein 6 (538 aa).

Positions 1 to 17 are cleaved as a signal peptide; that stretch reads MLLPLACLHGRVAQCLT. Disordered regions lie at residues 29-53 and 76-115; these read PRRG…PPAK and AAVG…SPGW. Residues 35–53 are compositionally biased toward low complexity; that stretch reads ARGAASTGAEAAPAAPPAK. The span at 85-103 shows a compositional bias: pro residues; that stretch reads RSPPSAPAPAPPPPAPAPP. The BTB domain occupies 136–206; that stretch reads ADVHFVVGPP…MYSDEIDLEA (71 aa).

In terms of tissue distribution, expressed in lens.

The protein resides in the cytoplasm. Adapter protein for the cul3 E3 ubiquitin-protein ligase complex. Involved in late neuronal development and muscle formation. The polypeptide is BTB/POZ domain-containing protein 6 (Homo sapiens (Human)).